Reading from the N-terminus, the 286-residue chain is Thymidylate synthase (286 aa).

R27 contacts dUMP. Residue H57 participates in (6R)-5,10-methylene-5,6,7,8-tetrahydrofolate binding. A dUMP-binding site is contributed by 148-149; sequence RR. The active-site Nucleophile is C168. Residues 188–191, N199, and 229–231 contribute to the dUMP site; these read RSAD and HLY. Residue D191 coordinates (6R)-5,10-methylene-5,6,7,8-tetrahydrofolate. A285 serves as a coordination point for (6R)-5,10-methylene-5,6,7,8-tetrahydrofolate.

This sequence belongs to the thymidylate synthase family. Bacterial-type ThyA subfamily. In terms of assembly, homodimer.

The protein localises to the cytoplasm. It carries out the reaction dUMP + (6R)-5,10-methylene-5,6,7,8-tetrahydrofolate = 7,8-dihydrofolate + dTMP. It functions in the pathway pyrimidine metabolism; dTTP biosynthesis. Catalyzes the reductive methylation of 2'-deoxyuridine-5'-monophosphate (dUMP) to 2'-deoxythymidine-5'-monophosphate (dTMP) while utilizing 5,10-methylenetetrahydrofolate (mTHF) as the methyl donor and reductant in the reaction, yielding dihydrofolate (DHF) as a by-product. This enzymatic reaction provides an intracellular de novo source of dTMP, an essential precursor for DNA biosynthesis. This Psychrobacter sp. (strain PRwf-1) protein is Thymidylate synthase.